Here is a 416-residue protein sequence, read N- to C-terminus: Transmembrane protease serine 11B-like protein (416 aa).

Topologically, residues 1–15 (MYRPVIASRKSIPPW) are cytoplasmic. The helical; Signal-anchor for type II membrane protein transmembrane segment at 16 to 36 (LIILCVLGVLAALGIIIGLLV) threads the bilayer. At 37 to 416 (HFLAVENKIY…RNWIASKTGI (380 aa)) the chain is on the extracellular side. An SEA domain is found at 44-161 (KIYYYQGGFK…GSLKLTEISK (118 aa)). A glycan (N-linked (GlcNAc...) asparagine) is linked at Asn107. The Peptidase S1 domain occupies 185 to 415 (ITGGSTAHKG…YRNWIASKTG (231 aa)). Cys210 and Cys226 are oxidised to a cystine. His225 (charge relay system) is an active-site residue. Residue Asn235 is glycosylated (N-linked (GlcNAc...) asparagine). Asp270 functions as the Charge relay system in the catalytic mechanism. 2 disulfides stabilise this stretch: Cys335/Cys351 and Cys362/Cys391. The Charge relay system role is filled by Ser366.

The protein belongs to the peptidase S1 family. Expressed in esophagus, cervix, tongue, and testes.

The protein resides in the cell membrane. With respect to regulation, inhibited by aprotinin, leupeptin, benzamidine, SERPINA1, SPINT1 and SPINT2. In terms of biological role, serine protease. The chain is Transmembrane protease serine 11B-like protein (Tmprss11b) from Mus musculus (Mouse).